The following is a 397-amino-acid chain: CCA-adding enzyme (397 aa).

Positions 27 and 30 each coordinate ATP. CTP is bound by residues Gly27 and Arg30. Positions 40 and 42 each coordinate Mg(2+). ATP-binding residues include Arg111, Asp154, Arg157, Arg160, and Arg163. The CTP site is built by Arg111, Asp154, Arg157, Arg160, and Arg163.

The protein belongs to the tRNA nucleotidyltransferase/poly(A) polymerase family. Bacterial CCA-adding enzyme type 3 subfamily. As to quaternary structure, homodimer. Mg(2+) serves as cofactor.

It catalyses the reaction a tRNA precursor + 2 CTP + ATP = a tRNA with a 3' CCA end + 3 diphosphate. It carries out the reaction a tRNA with a 3' CCA end + 2 CTP + ATP = a tRNA with a 3' CCACCA end + 3 diphosphate. Its function is as follows. Catalyzes the addition and repair of the essential 3'-terminal CCA sequence in tRNAs without using a nucleic acid template. Adds these three nucleotides in the order of C, C, and A to the tRNA nucleotide-73, using CTP and ATP as substrates and producing inorganic pyrophosphate. tRNA 3'-terminal CCA addition is required both for tRNA processing and repair. Also involved in tRNA surveillance by mediating tandem CCA addition to generate a CCACCA at the 3' terminus of unstable tRNAs. While stable tRNAs receive only 3'-terminal CCA, unstable tRNAs are marked with CCACCA and rapidly degraded. This chain is CCA-adding enzyme, found in Anoxybacillus flavithermus (strain DSM 21510 / WK1).